A 577-amino-acid polypeptide reads, in one-letter code: MMDRKQTAETLLTLSPAEVANLKEGINFFRNKTTGKEYILYKEKDHLKACKNLCKHQGGLFMKDIEDLDGRSVKCTKHNWKLDVSTMKYINPPGSFCQDELVIEMDENNGLSLVELNPPNPWDSDPRSPEELAFGEVQITYLTHACMDLKLGDKRMVFDPWLIGPAFARGWWLLHEPPSDWLERLCKADLIYISHMHSDHLSYPTLKQLSQRRPDIPIYVGDTERPVFWNLDQSGVGLTNINVVPFGIWQQVDKSLRFMILMDGVHPEMDTCIIVEYKGHKILNTVDCTRPNGGRLPEKVALMMSDFAGGASGFPMTFSGGKFTEEWKAQFIKAERRKLLNYKAQLVKDLQPRIYCPFAGYFVESHPSDKYIKETNTKNDPNQLNNLIRKNSDVVTWTPRPGAVLDLGRMLKDPTDSKGIVEPPEGTKIYKDSWDFGPYLEILNSAVRDEIFCHSSWIKEYFTWAGFKNYNLVVRMIETDEDFSPFPGGYDYLVDFLDLSFPKERPSREHPYEEIHSRVDVIRYVVKNGLLWDDLYIGFQTRLLRDPDIYHHLFWNHFQIKLPLTPPNWKSFLMHCD.

Residues 1–4 constitute a propeptide that is removed on maturation; sequence MMDR. The Rieske domain occupies 14-112; it reads LSPAEVANLK…IEMDENNGLS (99 aa). Positions 54, 56, 75, and 78 each coordinate [2Fe-2S] cluster.

Belongs to the CMP-Neu5Ac hydroxylase family. Requires [2Fe-2S] cluster as cofactor. Expressed in all tissues tested, except in brain.

It localises to the cytoplasm. The protein localises to the endoplasmic reticulum. It carries out the reaction CMP-N-acetyl-beta-neuraminate + 2 Fe(II)-[cytochrome b5] + O2 + 2 H(+) = CMP-N-glycoloyl-beta-neuraminate + 2 Fe(III)-[cytochrome b5] + H2O. It participates in amino-sugar metabolism; N-acetylneuraminate metabolism. In terms of biological role, sialic acids are components of carbohydrate chains of glycoconjugates and are involved in cell-cell recognition and cell-pathogen interactions. Catalyzes the conversion of CMP-N-acetylneuraminic acid (CMP-Neu5Ac) into its hydroxylated derivative CMP-N-glycolylneuraminic acid (CMP-Neu5Gc), a sialic acid abundantly expressed at the surface of many cells. This chain is Cytidine monophosphate-N-acetylneuraminic acid hydroxylase (Cmah), found in Mus musculus (Mouse).